The sequence spans 80 residues: Toxin Acra I-2 (80 aa).

Residues 1–22 (MMKLALFSIIVILFSLIGSIHG) form the signal peptide. The region spanning 25–80 (VPGNYPLDSSGNKYPCTVLGDNQSCIDVCKKHGVKYGYCYSFKCWCEFLEDKNVSI) is the LCN-type CS-alpha/beta domain. 3 disulfides stabilise this stretch: Cys-40–Cys-63, Cys-49–Cys-68, and Cys-53–Cys-70.

As to expression, expressed by the venom gland.

The protein resides in the secreted. Its function is as follows. Probable neurotoxin that inhibits ion channels. Is toxic to mice. Is about 2.8% of the total protein in the venom. The chain is Toxin Acra I-2 from Androctonus crassicauda (Arabian fat-tailed scorpion).